The chain runs to 101 residues: Urease subunit beta (101 aa).

This sequence belongs to the urease beta subunit family. Heterotrimer of UreA (gamma), UreB (beta) and UreC (alpha) subunits. Three heterotrimers associate to form the active enzyme.

It localises to the cytoplasm. The catalysed reaction is urea + 2 H2O + H(+) = hydrogencarbonate + 2 NH4(+). The protein operates within nitrogen metabolism; urea degradation; CO(2) and NH(3) from urea (urease route): step 1/1. The polypeptide is Urease subunit beta (Bradyrhizobium sp. (strain ORS 278)).